Consider the following 623-residue polypeptide: Chaperone protein HtpG (623 aa).

The segment at 1 to 341 is a; substrate-binding; sequence MEKREFKAES…SQDLSLNISR (341 aa). Residues 342-549 form a b region; that stretch reads EMLQHDRQLS…EGEVSIEMEK (208 aa). A c region spans residues 550–623; sequence ILSAMPNNQG…FTNDICKLMK (74 aa).

This sequence belongs to the heat shock protein 90 family. As to quaternary structure, homodimer.

It localises to the cytoplasm. Its function is as follows. Molecular chaperone. Has ATPase activity. The polypeptide is Chaperone protein HtpG (Clostridium perfringens (strain 13 / Type A)).